The following is a 538-amino-acid chain: Chaperonin GroEL 1 (538 aa).

ATP is bound by residues 29–32 (TLGP), 86–90 (DGTTT), Gly413, 478–480 (NAA), and Asp494.

Belongs to the chaperonin (HSP60) family. As to quaternary structure, forms a cylinder of 14 subunits composed of two heptameric rings stacked back-to-back. Interacts with the co-chaperonin GroES.

Its subcellular location is the cytoplasm. It carries out the reaction ATP + H2O + a folded polypeptide = ADP + phosphate + an unfolded polypeptide.. Functionally, together with its co-chaperonin GroES, plays an essential role in assisting protein folding. The GroEL-GroES system forms a nano-cage that allows encapsulation of the non-native substrate proteins and provides a physical environment optimized to promote and accelerate protein folding. This Corynebacterium glutamicum (strain ATCC 13032 / DSM 20300 / JCM 1318 / BCRC 11384 / CCUG 27702 / LMG 3730 / NBRC 12168 / NCIMB 10025 / NRRL B-2784 / 534) protein is Chaperonin GroEL 1.